Reading from the N-terminus, the 346-residue chain is UPF0283 membrane protein VP1870 (346 aa).

The disordered stretch occupies residues 1 to 30; the sequence is MSELKQKQIFSEKALEKEQQSDSPELTAQK. Residues 21-30 show a composition bias toward polar residues; that stretch reads SDSPELTAQK. A run of 2 helical transmembrane segments spans residues 73 to 93 and 98 to 118; these read VFAT…VTAV and WLAL…LGAI.

Belongs to the UPF0283 family.

It localises to the cell inner membrane. This is UPF0283 membrane protein VP1870 from Vibrio parahaemolyticus serotype O3:K6 (strain RIMD 2210633).